The following is a 113-amino-acid chain: Beta-defensin 112 (113 aa).

Cystine bridges form between cysteine 54-cysteine 82, cysteine 61-cysteine 75, and cysteine 65-cysteine 83.

The protein belongs to the beta-defensin family.

It is found in the secreted. Has antibacterial activity. The protein is Beta-defensin 112 (DEFB112) of Pan troglodytes (Chimpanzee).